The sequence spans 90 residues: uncharacterized protein (90 aa).

This sequence to E.coli RlpA.

This is an uncharacterized protein from Synechocystis sp. (strain ATCC 27184 / PCC 6803 / Kazusa).